A 992-amino-acid chain; its full sequence is Disks large-associated protein 4 (992 aa).

Residues 1-20 (MKGLGDSRPRHLSDSLDPPH) show a composition bias toward basic and acidic residues. Disordered stretches follow at residues 1-31 (MKGLGDSRPRHLSDSLDPPHEPLFAGPDRNP) and 157-225 (MEGT…PASG). Gly residues predominate over residues 162–171 (GKVGGNGSKK). Basic and acidic residues predominate over residues 172–194 (GGLEDGKGRRAKSKERAKAGEPK). The span at 199-208 (SNISGWWSSD) shows a compositional bias: polar residues. 2 positions are modified to phosphoserine: serine 206 and serine 207. Arginine 290 bears the Omega-N-methylarginine mark. The tract at residues 342 to 396 (TTLLSPRDMDSTAEGPIPCRRMRSGSYIKAMGDEDSDESGGGSPKPSPKTAARRQ) is disordered. Residues serine 377, serine 380, serine 384, serine 388, serine 405, serine 415, and serine 421 each carry the phosphoserine modification. Disordered stretches follow at residues 527–751 (SVSL…GPRQ), 763–798 (SYGDNSDPALEASSLPPPDPWLETSSSSPAEPAQPG), and 915–992 (TPEK…QTRL). Residues 528–554 (VSLQSLSPPPSTGSLSNSRTLPSSSCL) are compositionally biased toward low complexity. Residues 576-591 (VTVQSSTESAQDTYLD) show a composition bias toward polar residues. 6 positions are modified to phosphoserine: serine 580, serine 581, serine 609, serine 611, serine 665, and serine 744. Over residues 600-620 (TSQSGLSNSSDSLDSSTRPPS) the composition is skewed to low complexity. Threonine 915 bears the Phosphothreonine mark. 2 stretches are compositionally biased toward basic and acidic residues: residues 915–925 (TPEKRKEEKKP) and 940–958 (VSRDKASDAGDKQRQEARK). Residues 969-978 (VRQNSATESA) are compositionally biased toward polar residues. At serine 973 the chain carries Phosphoserine.

This sequence belongs to the SAPAP family. In terms of assembly, interacts with DLG1 and DLG4/PSD-95.

The protein localises to the membrane. In terms of biological role, may play a role in the molecular organization of synapses and neuronal cell signaling. Could be an adapter protein linking ion channel to the subsynaptic cytoskeleton. May induce enrichment of PSD-95/SAP90 at the plasma membrane. The polypeptide is Disks large-associated protein 4 (Dlgap4) (Mus musculus (Mouse)).